Reading from the N-terminus, the 461-residue chain is 3-oxoacyl-[acyl-carrier-protein] synthase, mitochondrial (461 aa).

The transit peptide at 1-28 directs the protein to the mitochondrion; the sequence is MATSNLRRHLSASRLRLNRFISTSSSYH. The Ketosynthase family 3 (KS3) domain maps to 30-460; sequence HRRVVVTGLG…GTNASLLFAS (431 aa). Residues cysteine 209, histidine 350, and histidine 389 each act as for beta-ketoacyl synthase activity in the active site.

This sequence belongs to the thiolase-like superfamily. Beta-ketoacyl-ACP synthases family. As to quaternary structure, homodimer. As to expression, expressed at the same level in leaves, roots, siliques and flowers.

The protein localises to the mitochondrion. The catalysed reaction is a fatty acyl-[ACP] + malonyl-[ACP] + H(+) = a 3-oxoacyl-[ACP] + holo-[ACP] + CO2. The enzyme catalyses butanoyl-[ACP] + malonyl-[ACP] + H(+) = 3-oxohexanoyl-[ACP] + holo-[ACP] + CO2. It carries out the reaction hexanoyl-[ACP] + malonyl-[ACP] + H(+) = 3-oxooctanoyl-[ACP] + holo-[ACP] + CO2. It catalyses the reaction octanoyl-[ACP] + malonyl-[ACP] + H(+) = 3-oxodecanoyl-[ACP] + holo-[ACP] + CO2. The catalysed reaction is decanoyl-[ACP] + malonyl-[ACP] + H(+) = 3-oxododecanoyl-[ACP] + holo-[ACP] + CO2. The enzyme catalyses dodecanoyl-[ACP] + malonyl-[ACP] + H(+) = 3-oxotetradecanoyl-[ACP] + holo-[ACP] + CO2. It carries out the reaction tetradecanoyl-[ACP] + malonyl-[ACP] + H(+) = 3-oxohexadecanoyl-[ACP] + holo-[ACP] + CO2. It catalyses the reaction hexadecanoyl-[ACP] + malonyl-[ACP] + H(+) = 3-oxooctadecanoyl-[ACP] + holo-[ACP] + CO2. The protein operates within lipid metabolism; fatty acid biosynthesis. Inhibited by cerulenin. Catalyzes all the condensation reaction of fatty acid synthesis by the addition to an acyl acceptor of two carbons from malonyl-ACP. Able to elongate saturated acyl chains from 4 to at least 16 carbons. Uses malonyl-CoA but not acetyl-CoA as primer substrate. When expressed in a heterologous system, reveals a bimodal distribution of products, with peaks at C8 and C14-C16. The major product of the reaction (octanoyl-ACP) is required for the lipoylation of essential mitochondrial proteins. Required for mitochondrial fatty acid synthesis (mtFAS). MtFAS are essential for photorespiration and plant development, probably by influencing mitochondrial membrane lipid composition and other lipid metabolic pathways. The protein is 3-oxoacyl-[acyl-carrier-protein] synthase, mitochondrial of Arabidopsis thaliana (Mouse-ear cress).